Consider the following 461-residue polypeptide: MAVSLWQQCIGRLQDELPAQQFSMWIRPLQAEMDGDTLVLYAPNRFVLDWVREKYINIINQFFTEQMGSDAPKLRFDIGSRPSAKKFEPAPVATVRAPNTQTKATVGTYFNTQAEPIANANHRSNINPTYQFDNFVEGKSNQLGKAAALQVAENPGGAYNPLFLYGGTGLGKTHLLHAVGNGIIKNNPNAKVVYMHSERFVQDMVKALQNNAIEEFKRYYRSVDALFIDDIQFFANKDRSQEEFFHTFNALLEGNHQIILTSDRYPKEIDGVEDRLKSRFGWGLTVAIEPPELETRVAILMRKAQESGINLPDEVAFFIAKRLRSNVRELEGALNRVIANANFTGRPITIDFVREALRDLLALQEKLVTIDNIQKTVAEYYKIKMADMLSKRRSRSVARPRQVAMALSKELTNQSLPEIGDAFGGRDHTTVLHACRKIAQLREESHDIKEDYANLIRTLSS.

A domain I, interacts with DnaA modulators region spans residues 1–84 (MAVSLWQQCI…RFDIGSRPSA (84 aa)). The tract at residues 84-124 (AKKFEPAPVATVRAPNTQTKATVGTYFNTQAEPIANANHRS) is domain II. The interval 125 to 341 (NINPTYQFDN…GALNRVIANA (217 aa)) is domain III, AAA+ region. Positions 169, 171, 172, and 173 each coordinate ATP. A domain IV, binds dsDNA region spans residues 342–461 (NFTGRPITID…YANLIRTLSS (120 aa)).

It belongs to the DnaA family. In terms of assembly, oligomerizes as a right-handed, spiral filament on DNA at oriC.

Its subcellular location is the cytoplasm. Functionally, plays an essential role in the initiation and regulation of chromosomal replication. ATP-DnaA binds to the origin of replication (oriC) to initiate formation of the DNA replication initiation complex once per cell cycle. Binds the DnaA box (a 9 base pair repeat at the origin) and separates the double-stranded (ds)DNA. Forms a right-handed helical filament on oriC DNA; dsDNA binds to the exterior of the filament while single-stranded (ss)DNA is stabiized in the filament's interior. The ATP-DnaA-oriC complex binds and stabilizes one strand of the AT-rich DNA unwinding element (DUE), permitting loading of DNA polymerase. After initiation quickly degrades to an ADP-DnaA complex that is not apt for DNA replication. Binds acidic phospholipids. The chain is Chromosomal replication initiator protein DnaA from Shewanella putrefaciens (strain CN-32 / ATCC BAA-453).